A 513-amino-acid chain; its full sequence is Activin receptor type-2A (513 aa).

An N-terminal signal peptide occupies residues methionine 1–glycine 19. The Extracellular portion of the chain corresponds to alanine 20–proline 135. Intrachain disulfides connect cysteine 30–cysteine 60, cysteine 50–cysteine 78, cysteine 85–cysteine 104, cysteine 91–cysteine 103, and cysteine 105–cysteine 110. N-linked (GlcNAc...) asparagine glycans are attached at residues asparagine 43 and asparagine 66. The helical transmembrane segment at tyrosine 136–tyrosine 161 threads the bilayer. Over arginine 162–leucine 513 the chain is Cytoplasmic. The Protein kinase domain maps to leucine 192 to leucine 485. Residues lysine 198–valine 206 and lysine 219 each bind ATP. The active-site Proton acceptor is the aspartate 322.

This sequence belongs to the protein kinase superfamily. TKL Ser/Thr protein kinase family. TGFB receptor subfamily. In terms of assembly, part of a complex consisting of MAGI2/ARIP1, ACVR2A, ACVR1B and SMAD3. Interacts with MAGI2/ARIP1. Interacts with type I receptor ACVR1. Interacts with TSC22D1/TSC-22. Interacts with activin A/INHBA. It depends on Mg(2+) as a cofactor. The cofactor is Mn(2+).

Its subcellular location is the cell membrane. It carries out the reaction L-threonyl-[receptor-protein] + ATP = O-phospho-L-threonyl-[receptor-protein] + ADP + H(+). The catalysed reaction is L-seryl-[receptor-protein] + ATP = O-phospho-L-seryl-[receptor-protein] + ADP + H(+). On ligand binding, forms a receptor complex consisting of two type II and two type I transmembrane serine/threonine kinases. Type II receptors phosphorylate and activate type I receptors which autophosphorylate, then bind and activate SMAD transcriptional regulators. Receptor for activin A, activin B and inhibin A. Mediates induction of adipogenesis by GDF6. The sequence is that of Activin receptor type-2A (ACVR2A) from Ovis aries (Sheep).